The primary structure comprises 337 residues: Ornithine carbamoyltransferase, catabolic (337 aa).

Carbamoyl phosphate-binding positions include 57–60, Q84, R108, and 135–138; these read STRT and HPTQ. L-ornithine contacts are provided by residues N167, D231, and 235–236; that span reads SM. Residues 272–273 and R317 each bind carbamoyl phosphate; that span reads CL.

It belongs to the aspartate/ornithine carbamoyltransferase superfamily. OTCase family.

It is found in the cytoplasm. It carries out the reaction carbamoyl phosphate + L-ornithine = L-citrulline + phosphate + H(+). It functions in the pathway amino-acid degradation; L-arginine degradation via ADI pathway; carbamoyl phosphate from L-arginine: step 2/2. In terms of biological role, reversibly catalyzes the transfer of the carbamoyl group from carbamoyl phosphate (CP) to the N(epsilon) atom of ornithine (ORN) to produce L-citrulline. The protein is Ornithine carbamoyltransferase, catabolic of Streptococcus suis (strain 89/1591).